We begin with the raw amino-acid sequence, 330 residues long: MALPEFTMRQLLEAGVHFGHQSHRWNPKMADYIFGARNNIHIIDLAQTVPLLHTALQAVSDTVAKGGRILFVGTKRQAQDNVADAAKRCAQYFVNSRWLGGTLTNWKTISASIKRLRHLDEVLSSGEANSYTKKERLTLQRERDKLDRSLGGIKDMGGLPDMIFVIDTNKEDIAIQEAQRLNIPVAAIVDTNCDPKGITYVVPGNDDAGRAISLYCDLIARAAIDGISRAQGELGIDIGASAAPLEEELPAATAASTFQGLPGPRGTADDLKKLTGVSGAIEKKLNDLGIFHFWQLAELDHDTAHQIGEEVGLPSRADAWVAQAKSLADA.

Belongs to the universal ribosomal protein uS2 family.

The chain is Small ribosomal subunit protein uS2 from Bradyrhizobium sp. (strain BTAi1 / ATCC BAA-1182).